The sequence spans 1612 residues: DNA (cytosine-5)-methyltransferase PliMCI (1612 aa).

The 95-residue stretch at 7–101 folds into the DMAP1-binding domain; sequence CDQVIPPNVR…NGDTKEEASS (95 aa). The disordered stretch occupies residues 87–338; it reads TCSPVNGDTK…TAESKQPPLR (252 aa). Residues 94-110 are compositionally biased toward basic and acidic residues; that stretch reads DTKEEASSNGKDDEKAE. Positions 115 to 131 are enriched in low complexity; the sequence is NGTTSNGSTTNGSSGSS. Over residues 132–142 the composition is skewed to polar residues; sequence KANGHTNGGYV. The span at 143 to 154 shows a compositional bias: low complexity; it reads QSSSQEETGTSQ. Basic and acidic residues-rich tracts occupy residues 193 to 212, 222 to 232, and 260 to 289; these read VLGDDERDGVEKKEGEKKDV, EESATPDEKTL, and KKEEEKMEESSSMEVDKKEMENGDNGKKEE. The segment at 626 to 672 adopts a CXXC-type zinc-finger fold; sequence ASERKKRCGVCEICQAPDCGKCTACKDMIKFGGSGKAKQACKDRRCP. 8 residues coordinate Zn(2+): Cys-633, Cys-636, Cys-639, Cys-644, Cys-647, Cys-650, Cys-666, and Cys-671. The disordered stretch occupies residues 677–708; the sequence is QEADENDIDEMDNSSNKENKDEKKAKKGRKLE. Over residues 678–688 the composition is skewed to acidic residues; the sequence is EADENDIDEMD. Residues 691–708 are compositionally biased toward basic and acidic residues; that stretch reads SNKENKDEKKAKKGRKLE. BAH domains are found at residues 743 to 871 and 967 to 1089; these read EKIE…EDYE and NYRK…EDPP. The segment at 1084–1121 is disordered; the sequence is CFEDPPSKSRSTRMKGKGKGKGKGKAKGKIAVEKEEEK. Positions 1093–1111 are enriched in basic residues; it reads RSTRMKGKGKGKGKGKAKG. Residues 1131-1590 enclose the SAM-dependent MTase C5-type domain; sequence LKCLDVFAGC…MEIKVCLQTK (460 aa). Residues 1142–1143, 1160–1161, 1182–1183, and Cys-1183 contribute to the S-adenosyl-L-methionine site; these read GL, EK, and DC. The active site involves Cys-1218. Positions 1569 and 1571 each coordinate S-adenosyl-L-methionine.

The protein belongs to the class I-like SAM-binding methyltransferase superfamily. C5-methyltransferase family.

Its subcellular location is the nucleus. It catalyses the reaction a 2'-deoxycytidine in DNA + S-adenosyl-L-methionine = a 5-methyl-2'-deoxycytidine in DNA + S-adenosyl-L-homocysteine + H(+). Its function is as follows. Methylates CpG residues. This chain is DNA (cytosine-5)-methyltransferase PliMCI (DNMT), found in Paracentrotus lividus (Common sea urchin).